The primary structure comprises 153 residues: MTPTLETKYVFTITARIGDVTSAGEIGTGVRRIIPILGGEVKGEGISGKVLPFGADFQIIRPNELIELEAKYAFETDDGAVVYVENAGIRFGPVELLQKLKCGEPVDPKLIYFRTRPRFETGHPNYQWLMQHLFIGSAARHADRVVIDVHQVL.

This sequence belongs to the UPF0311 family.

This Rhodopseudomonas palustris (strain TIE-1) protein is UPF0311 protein Rpal_1987.